Reading from the N-terminus, the 247-residue chain is ATP synthase subunit a (247 aa).

6 helical membrane passes run 26 to 46 (ITNN…LFYV), 85 to 105 (YFPL…IGLL), 115 to 135 (IIFT…INFF), 141 to 161 (FFNL…LVVI), 178 to 198 (FANM…IFNV), and 205 to 225 (ISFL…CIAI).

The protein belongs to the ATPase A chain family. As to quaternary structure, F-type ATPases have 2 components, CF(1) - the catalytic core - and CF(0) - the membrane proton channel. CF(1) has five subunits: alpha(3), beta(3), gamma(1), delta(1), epsilon(1). CF(0) has three main subunits: a, b and c.

Its subcellular location is the mitochondrion inner membrane. Its function is as follows. Mitochondrial membrane ATP synthase (F(1)F(0) ATP synthase or Complex V) produces ATP from ADP in the presence of a proton gradient across the membrane which is generated by electron transport complexes of the respiratory chain. F-type ATPases consist of two structural domains, F(1) - containing the extramembraneous catalytic core and F(0) - containing the membrane proton channel, linked together by a central stalk and a peripheral stalk. During catalysis, ATP synthesis in the catalytic domain of F(1) is coupled via a rotary mechanism of the central stalk subunits to proton translocation. Key component of the proton channel; it may play a direct role in the translocation of protons across the membrane. The chain is ATP synthase subunit a (ATP6) from Acanthamoeba castellanii (Amoeba).